The chain runs to 354 residues: Cyclin-D1-2 (354 aa).

Disordered regions lie at residues 37–74 (FFQQ…EEEE) and 331–354 (TTAT…RRKM). Composition is skewed to low complexity over residues 44–66 (PAPA…AGSC) and 331–346 (TTAT…VSSS).

Belongs to the cyclin family. Cyclin D subfamily.

In Oryza sativa subsp. japonica (Rice), this protein is Cyclin-D1-2 (CYCD1-2).